Consider the following 297-residue polypeptide: HTH-type transcriptional regulator ArgP (297 aa).

The region spanning proline 4–threonine 60 is the HTH lysR-type domain. A DNA-binding region (H-T-H motif) is located at residues phenylalanine 21–lysine 40.

It belongs to the LysR transcriptional regulatory family. As to quaternary structure, homodimer.

Its function is as follows. Controls the transcription of genes involved in arginine and lysine metabolism. The protein is HTH-type transcriptional regulator ArgP of Escherichia coli O127:H6 (strain E2348/69 / EPEC).